Consider the following 494-residue polypeptide: AFQVNTNINALTTSAGATQLGLKNSLEKLSSGLRINKAADDASGMTISDSLRSQASALGQAISNANDGIGIIQVADKAMDEQLKILDTIKVKATQAAQDGQSLESRKAIQSDIIRLIQGLDNIGNTTSYNGQSLLSGQWTNKEFQIGTYSNQSIKVSVGSTTSDKIGQVRINTGAMITAASEATLTFKQINGGGTSPLEGVKISHSVGTGLGVLAEVINKNSDKTGIRAKASVETTSDKEIMSGNLKNLTINDVNIGNIVDIKKGDADGRLVQAINALTSSTGVEASTDSKGRLNLRSVDGRGIVLKADASEDNGDGKSAPMAIDAVNGGQSITDGEGAANYGRLSLVRLDARDIVLTSSDKPDENKFSAIGFGDNNVAMATVNLRDVLGKFDASVKSASGANYNAVIASGNSNLGAGVTTLVGAMLVMDIADSARKTLDKIRSDLGSVQGQMVSTVNNISVTQVNVKAAESRMREVDFAAESAEFNKYNILAQ.

It belongs to the bacterial flagellin family. As to quaternary structure, heteromer of FlaA and FlaB. FlaB is located proximal to the hook while the remainder of the filament is composed of the predominant FlaA.

The protein localises to the secreted. Its subcellular location is the bacterial flagellum. Flagellin is the subunit protein which polymerizes to form the filaments of bacterial flagella. Important for motility and virulence. The sequence is that of Flagellin A (flaA) from Helicobacter mustelae.